Consider the following 248-residue polypeptide: Granulin (248 aa).

Belongs to the polyhedrin family.

Functionally, component of the virus occlusion bodies, which are large proteinaceous structures, that protect the virus from the outside environment for extended periods until they are ingested by insect larvae. This is Granulin from Trichoplusia ni (Cabbage looper).